A 587-amino-acid polypeptide reads, in one-letter code: Leucine-rich repeat-containing protein 63 (587 aa).

LRR repeat units follow at residues 251 to 274 (QSVI…IPPR), 344 to 367 (AFQL…ILCL), 368 to 390 (KNLQ…IQQL), 392 to 413 (FLRI…LFSL), 414 to 436 (SYLE…IQKL), 437 to 459 (RSLE…ILKL), and 487 to 510 (LTQI…IPVE).

The chain is Leucine-rich repeat-containing protein 63 (LRRC63) from Homo sapiens (Human).